Here is a 65-residue protein sequence, read N- to C-terminus: Large ribosomal subunit protein uL29 (65 aa).

The protein belongs to the universal ribosomal protein uL29 family.

The protein is Large ribosomal subunit protein uL29 of Syntrophus aciditrophicus (strain SB).